The primary structure comprises 509 residues: GRAS family protein RAD1 (509 aa).

Positions 125–508 constitute a GRAS domain; that stretch reads EDGCADGMRL…KPIVAASCWK (384 aa). A leucine repeat I (LRI) region spans residues 132–198; it reads MRLVQLLIAC…IQPIGSGAGV (67 aa). The interval 217-286 is VHIID; it reads YRLVYETCPH…SGHGRVRRLR (70 aa). The short motif at 248 to 252 is the VHIID element; that stretch reads VHVVD. Residues 299–331 are leucine repeat II (LRII); that stretch reads AIGDELSDYANNLGINLEFSVVQKNLENLQPED. The PFYRE stretch occupies residues 340-431; the sequence is LVVNSILQLH…QFYFAEEIKN (92 aa). Positions 434–508 are SAW; that stretch reads SCEGPLRMER…KPIVAASCWK (75 aa).

The protein belongs to the GRAS family. As to quaternary structure, interacts with RAM1 and NSP2. As to expression, expressed in roots under low phosphate (Pi) conditions.

It localises to the nucleus. Functionally, transcription factor acting as a regulator of arbuscular mycorrhiza (AM)-related genes (e.g. PT4, STR and RAM2). Required for the morphogenesis of arbuscules upon symbiosis with AM fungi (e.g. Rhizophagus irregularis). Also involved in restricting mycorrhizal colonization of the root meristem. In Lotus japonicus (Lotus corniculatus var. japonicus), this protein is GRAS family protein RAD1.